The primary structure comprises 147 residues: Small ribosomal subunit protein eS19 (147 aa).

This sequence belongs to the eukaryotic ribosomal protein eS19 family. In terms of assembly, component of the small ribosomal subunit.

The protein resides in the cytoplasm. It is found in the nucleus. Its function is as follows. Component of the small ribosomal subunit. The ribosome is a large ribonucleoprotein complex responsible for the synthesis of proteins in the cell. Required for pre-rRNA processing and maturation of 40S ribosomal subunits. The sequence is that of Small ribosomal subunit protein eS19 (rps19) from Ictalurus punctatus (Channel catfish).